A 346-amino-acid polypeptide reads, in one-letter code: Ferredoxin--NADP reductase (346 aa).

Residues Glu35, Gln43, Tyr48, Val88, Phe122, Asp287, and Thr327 each coordinate FAD.

The protein belongs to the ferredoxin--NADP reductase type 2 family. As to quaternary structure, homodimer. Requires FAD as cofactor.

The catalysed reaction is 2 reduced [2Fe-2S]-[ferredoxin] + NADP(+) + H(+) = 2 oxidized [2Fe-2S]-[ferredoxin] + NADPH. The sequence is that of Ferredoxin--NADP reductase from Oenococcus oeni (strain ATCC BAA-331 / PSU-1).